Consider the following 186-residue polypeptide: UPF0301 protein CV_3909 (186 aa).

Belongs to the UPF0301 (AlgH) family.

The sequence is that of UPF0301 protein CV_3909 from Chromobacterium violaceum (strain ATCC 12472 / DSM 30191 / JCM 1249 / CCUG 213 / NBRC 12614 / NCIMB 9131 / NCTC 9757 / MK).